The primary structure comprises 612 residues: MPAYRSRTTTHGRNMAGARGLWRATGMKDSDFGKPIIAVVNSFTQFVPGHVHLKDLGQLVAREIEAAGGVAKEFNTIAVDDGIAMGHDGMLYSLPSREIIADSVEYMVNAHCADAMVCISNCDKITPGMLMAALRLNIPAVFVSGGPMEAGKVVLHGKKHALDLVDAMVAAADDSVSDEDVKVIERSACPTCGSCSGMFTANSMNCLTEALGLSLPGNGSTLATHADRKRLFVEAGHLVVDLARRYYEQEDERILPRSVASKKAFENAMALDIAMGGSTNTVLHILAAAYEGEVDFTMDDIDRLSRKVPCLSKVAPAKSDVHMEDVHRAGGIMSILGELEKGGLINRDCPTVHSETIGDAIDRWDITRTSSETVRNFFRAAPGGIPTQVAFSQEARWDDLDTDREKGVIRSVEHPFSKDGGLAVLKGNIALDGCIVKTAGVDESILKFSGPARVFESQDASVKAILGNEIKAGDVVVIRYEGPKGGPGMQEMLYPTSYLKSKGLGKACALITDGRFSGGTSGLSIGHVSPEAANGGTIGLVREGDIIDIDIPNRTISLRVDEAELATRRAEQDAKGWQPAEQRKRRVTTALKAYAAFATSADRGAVRDLGDR.

Asp81 contacts Mg(2+). Cys122 is a binding site for [2Fe-2S] cluster. The Mg(2+) site is built by Asp123 and Lys124. The residue at position 124 (Lys124) is an N6-carboxylysine. Cys195 lines the [2Fe-2S] cluster pocket. Glu491 is a binding site for Mg(2+). The active-site Proton acceptor is Ser517.

It belongs to the IlvD/Edd family. As to quaternary structure, homodimer. Requires [2Fe-2S] cluster as cofactor. The cofactor is Mg(2+).

The enzyme catalyses (2R)-2,3-dihydroxy-3-methylbutanoate = 3-methyl-2-oxobutanoate + H2O. The catalysed reaction is (2R,3R)-2,3-dihydroxy-3-methylpentanoate = (S)-3-methyl-2-oxopentanoate + H2O. It functions in the pathway amino-acid biosynthesis; L-isoleucine biosynthesis; L-isoleucine from 2-oxobutanoate: step 3/4. Its pathway is amino-acid biosynthesis; L-valine biosynthesis; L-valine from pyruvate: step 3/4. Functionally, functions in the biosynthesis of branched-chain amino acids. Catalyzes the dehydration of (2R,3R)-2,3-dihydroxy-3-methylpentanoate (2,3-dihydroxy-3-methylvalerate) into 2-oxo-3-methylpentanoate (2-oxo-3-methylvalerate) and of (2R)-2,3-dihydroxy-3-methylbutanoate (2,3-dihydroxyisovalerate) into 2-oxo-3-methylbutanoate (2-oxoisovalerate), the penultimate precursor to L-isoleucine and L-valine, respectively. The sequence is that of Dihydroxy-acid dehydratase from Sinorhizobium fredii (strain NBRC 101917 / NGR234).